The chain runs to 145 residues: MSQKTIKGYINLIIPAAGATPAPPIGPALGQRKVNIAAFCKDFNDATNGMEKGVPLPTVITVYDDNSFSFKVKTPPASYFLKKYAKITKGSSATKKEAMVGKVTLDACREIAKLKISDLNTKNIEAATKIICGSAASMGLEVVGN.

It belongs to the universal ribosomal protein uL11 family. Part of the ribosomal stalk of the 50S ribosomal subunit. Interacts with L10 and the large rRNA to form the base of the stalk. L10 forms an elongated spine to which L12 dimers bind in a sequential fashion forming a multimeric L10(L12)X complex. One or more lysine residues are methylated.

Functionally, forms part of the ribosomal stalk which helps the ribosome interact with GTP-bound translation factors. This Rickettsia typhi (strain ATCC VR-144 / Wilmington) protein is Large ribosomal subunit protein uL11.